Consider the following 251-residue polypeptide: Triosephosphate isomerase 1 (251 aa).

9-11 (NWK) lines the substrate pocket. His95 (electrophile) is an active-site residue. The active-site Proton acceptor is the Glu167. Substrate-binding positions include Gly173, Ser213, and 234-235 (GG).

Belongs to the triosephosphate isomerase family. Homodimer.

It is found in the cytoplasm. It catalyses the reaction D-glyceraldehyde 3-phosphate = dihydroxyacetone phosphate. It participates in carbohydrate biosynthesis; gluconeogenesis. It functions in the pathway carbohydrate degradation; glycolysis; D-glyceraldehyde 3-phosphate from glycerone phosphate: step 1/1. Its function is as follows. Involved in the gluconeogenesis. Catalyzes stereospecifically the conversion of dihydroxyacetone phosphate (DHAP) to D-glyceraldehyde-3-phosphate (G3P). This Listeria innocua serovar 6a (strain ATCC BAA-680 / CLIP 11262) protein is Triosephosphate isomerase 1.